The following is a 214-amino-acid chain: Ras-like protein rasZ (214 aa).

Position 16–23 (16–23) interacts with GTP; sequence GDGGVGKT. Positions 38 to 46 match the Effector region motif; the sequence is YDPTIEDSY. Residues 63 to 67 and 122 to 125 contribute to the GTP site; these read DTAGQ and NKSD. Cys211 is modified (cysteine methyl ester). The S-geranylgeranyl cysteine moiety is linked to residue Cys211. A propeptide spans 212-214 (removed in mature form); the sequence is KMM.

Belongs to the small GTPase superfamily. Ras family.

It localises to the cell membrane. The catalysed reaction is GTP + H2O = GDP + phosphate + H(+). Its function is as follows. Ras proteins bind GDP/GTP and possess intrinsic GTPase activity. The protein is Ras-like protein rasZ (rasZ) of Dictyostelium discoideum (Social amoeba).